We begin with the raw amino-acid sequence, 200 residues long: Large ribosomal subunit protein uL4 (200 aa).

The interval 43–71 is disordered; sequence RAQKTRAEVSGSGKKPWRQKGTGRARSGD.

This sequence belongs to the universal ribosomal protein uL4 family. Part of the 50S ribosomal subunit.

Functionally, one of the primary rRNA binding proteins, this protein initially binds near the 5'-end of the 23S rRNA. It is important during the early stages of 50S assembly. It makes multiple contacts with different domains of the 23S rRNA in the assembled 50S subunit and ribosome. In terms of biological role, forms part of the polypeptide exit tunnel. This chain is Large ribosomal subunit protein uL4, found in Histophilus somni (strain 2336) (Haemophilus somnus).